Here is a 758-residue protein sequence, read N- to C-terminus: Amyloid beta precursor protein binding family B member 2 (758 aa).

Phosphoserine is present on S123. The tract at residues 134 to 154 (KLEGKEPHPQDSSSCEILPSQ) is disordered. Position 160 is a phosphoserine (S160). A compositionally biased stretch (basic and acidic residues) spans 176 to 190 (EQNRGNHHGTAEEKS). Disordered stretches follow at residues 176-195 (EQNR…PVQG), 206-295 (LLLQ…LPPG), and 326-351 (DLQG…KQPW). 2 stretches are compositionally biased toward polar residues: residues 212–230 (NRPQ…SSSP) and 261–275 (SWTT…PSSP). Residues 290–322 (PDLPPGWKRVSDIAGTYYWHIPTGTTQWERPVS) form the WW domain. Over residues 331-340 (RKGSLSSVTP) the composition is skewed to polar residues. Phosphoserine occurs at positions 334, 409, and 412. 2 PID domains span residues 413–578 (DPEA…LQVD) and 584–736 (TELV…VTTN).

In terms of assembly, interacts (via C-terminus) with APP (via C-terminus). Interacts with APLP2 (via cytoplasmic domain). In terms of tissue distribution, widely expressed.

The protein resides in the endoplasmic reticulum. Its subcellular location is the golgi apparatus. It localises to the early endosome. Plays a role in the maintenance of lens transparency, and may also play a role in muscle cell strength. Involved in hippocampal neurite branching and neuromuscular junction formation, as a result plays a role in spatial memory functioning. Activates transcription of APP. This chain is Amyloid beta precursor protein binding family B member 2, found in Homo sapiens (Human).